The primary structure comprises 631 residues: 1-deoxy-D-xylulose-5-phosphate synthase (631 aa).

Positions 1 to 21 are disordered; sequence MPTTFHEIPRERPLTPLLDSA. Thiamine diphosphate-binding positions include H87 and 128 to 130; that span reads GHS. D159 is a Mg(2+) binding site. Residues 160–161, N188, F295, and E377 contribute to the thiamine diphosphate site; that span reads GA. Mg(2+) is bound at residue N188.

This sequence belongs to the transketolase family. DXPS subfamily. In terms of assembly, homodimer. Mg(2+) is required as a cofactor. It depends on thiamine diphosphate as a cofactor.

It catalyses the reaction D-glyceraldehyde 3-phosphate + pyruvate + H(+) = 1-deoxy-D-xylulose 5-phosphate + CO2. Its pathway is metabolic intermediate biosynthesis; 1-deoxy-D-xylulose 5-phosphate biosynthesis; 1-deoxy-D-xylulose 5-phosphate from D-glyceraldehyde 3-phosphate and pyruvate: step 1/1. Functionally, catalyzes the acyloin condensation reaction between C atoms 2 and 3 of pyruvate and glyceraldehyde 3-phosphate to yield 1-deoxy-D-xylulose-5-phosphate (DXP). This is 1-deoxy-D-xylulose-5-phosphate synthase from Ectopseudomonas mendocina (strain ymp) (Pseudomonas mendocina).